The primary structure comprises 179 residues: Replication restart protein DnaT (179 aa).

Residues 156–179 form a disordered region; the sequence is GGLPKRDVNTVSEPDSQIPPGFRG.

The protein belongs to the DnaT family. In terms of assembly, homooligomerizes. Interacts with PriB. Component of the replication restart primosome. Primosome assembly occurs via a 'hand-off' mechanism. PriA binds to replication forks, subsequently PriB then DnaT bind; DnaT then displaces ssDNA to generate the helicase loading substrate.

Functionally, involved in the restart of stalled replication forks, which reloads the replicative helicase on sites other than the origin of replication. Can function in multiple replication restart pathways. Displaces ssDNA from a PriB-ssDNA complex. Probably forms a spiral filament on ssDNA. The chain is Replication restart protein DnaT from Escherichia coli O17:K52:H18 (strain UMN026 / ExPEC).